The primary structure comprises 319 residues: Acetyl-coenzyme A carboxylase carboxyl transferase subunit alpha (319 aa).

One can recognise a CoA carboxyltransferase C-terminal domain in the interval 39 to 293 (KLEQKAAQLL…GDAIAEELKG (255 aa)).

It belongs to the AccA family. In terms of assembly, acetyl-CoA carboxylase is a heterohexamer composed of biotin carboxyl carrier protein (AccB), biotin carboxylase (AccC) and two subunits each of ACCase subunit alpha (AccA) and ACCase subunit beta (AccD).

It is found in the cytoplasm. It catalyses the reaction N(6)-carboxybiotinyl-L-lysyl-[protein] + acetyl-CoA = N(6)-biotinyl-L-lysyl-[protein] + malonyl-CoA. The protein operates within lipid metabolism; malonyl-CoA biosynthesis; malonyl-CoA from acetyl-CoA: step 1/1. Functionally, component of the acetyl coenzyme A carboxylase (ACC) complex. First, biotin carboxylase catalyzes the carboxylation of biotin on its carrier protein (BCCP) and then the CO(2) group is transferred by the carboxyltransferase to acetyl-CoA to form malonyl-CoA. This chain is Acetyl-coenzyme A carboxylase carboxyl transferase subunit alpha, found in Parvibaculum lavamentivorans (strain DS-1 / DSM 13023 / NCIMB 13966).